We begin with the raw amino-acid sequence, 344 residues long: Holliday junction branch migration complex subunit RuvB (344 aa).

A large ATPase domain (RuvB-L) region spans residues 4–194 (CLLRFCYNSL…FGITGHMEYY (191 aa)). Residues L33, R34, G75, K78, T79, T80, 141–143 (EDF), R184, Y194, and R231 each bind ATP. T79 is a Mg(2+) binding site. Residues 195 to 265 (TDIDLTEIVE…ITDKALTMLD (71 aa)) form a small ATPAse domain (RuvB-S) region. Residues 268–344 (HEGLDYVDQK…YEHLGYRYTE (77 aa)) are head domain (RuvB-H). DNA contacts are provided by R304, R323, R325, and R328.

This sequence belongs to the RuvB family. In terms of assembly, homohexamer. Forms an RuvA(8)-RuvB(12)-Holliday junction (HJ) complex. HJ DNA is sandwiched between 2 RuvA tetramers; dsDNA enters through RuvA and exits via RuvB. An RuvB hexamer assembles on each DNA strand where it exits the tetramer. Each RuvB hexamer is contacted by two RuvA subunits (via domain III) on 2 adjacent RuvB subunits; this complex drives branch migration. In the full resolvosome a probable DNA-RuvA(4)-RuvB(12)-RuvC(2) complex forms which resolves the HJ.

The protein resides in the cytoplasm. It catalyses the reaction ATP + H2O = ADP + phosphate + H(+). The RuvA-RuvB-RuvC complex processes Holliday junction (HJ) DNA during genetic recombination and DNA repair, while the RuvA-RuvB complex plays an important role in the rescue of blocked DNA replication forks via replication fork reversal (RFR). RuvA specifically binds to HJ cruciform DNA, conferring on it an open structure. The RuvB hexamer acts as an ATP-dependent pump, pulling dsDNA into and through the RuvAB complex. RuvB forms 2 homohexamers on either side of HJ DNA bound by 1 or 2 RuvA tetramers; 4 subunits per hexamer contact DNA at a time. Coordinated motions by a converter formed by DNA-disengaged RuvB subunits stimulates ATP hydrolysis and nucleotide exchange. Immobilization of the converter enables RuvB to convert the ATP-contained energy into a lever motion, pulling 2 nucleotides of DNA out of the RuvA tetramer per ATP hydrolyzed, thus driving DNA branch migration. The RuvB motors rotate together with the DNA substrate, which together with the progressing nucleotide cycle form the mechanistic basis for DNA recombination by continuous HJ branch migration. Branch migration allows RuvC to scan DNA until it finds its consensus sequence, where it cleaves and resolves cruciform DNA. The chain is Holliday junction branch migration complex subunit RuvB from Streptococcus mutans serotype c (strain ATCC 700610 / UA159).